Here is a 581-residue protein sequence, read N- to C-terminus: Protein LYRIC (581 aa).

Topologically, residues 1–49 are lumenal; sequence MAARSWQDELAQQAEEGSARLRELLSVGLGFLRTELGLDLGLEPKRYPS. The activation of NF-kappa-B stretch occupies residues 1–71; it reads MAARSWQDEL…LLLFLLGYGW (71 aa). Residues 50 to 70 form a helical membrane-spanning segment; it reads WVILVGTGALGLLLLFLLGYG. Topologically, residues 71–581 are cytoplasmic; sequence WAAACAGARK…KKKKKARRET (511 aa). The segment at 72 to 168 is interaction with BCCIP; the sequence is AAACAGARKK…EKSKKNKKKS (97 aa). The disordered stretch occupies residues 77-221; the sequence is GARKKRRSPP…DSGSLDSTIP (145 aa). The interval 100–204 is interaction with RELA; that stretch reads EDPAQLKNLR…ISHREKRQQR (105 aa). Over residues 108-126 the composition is skewed to basic and acidic residues; it reads LRSEEQKKKNRKKLPEKPK. Position 142 is a phosphothreonine (T142). The segment covering 159–168 has biased composition (basic residues); that stretch reads EKSKKNKKKS. A Phosphoserine modification is found at S179. Residues 197–207 show a composition bias toward basic residues; it reads HREKRQQRKRD. S215 and S250 each carry phosphoserine. K263 carries the N6-acetyllysine modification. The disordered stretch occupies residues 280–581; the sequence is VNGGGWSEKS…KKKKKARRET (302 aa). A phosphoserine mark is found at S297, S305, and S310. Over residues 318-331 the composition is skewed to polar residues; it reads QSAWTQDPGDTNAN. A phosphoserine mark is found at S343 and S368. 2 stretches are compositionally biased toward polar residues: residues 353–371 and 382–393; these read EPVS…SRNQ and NGLSSADPSSDW. The tract at residues 380 to 442 is lung-homing for mammary tumors; the sequence is GLNGLSSADP…EGALPTGKSK (63 aa). Phosphoserine is present on residues S414 and S425. Basic and acidic residues predominate over residues 421–433; the sequence is DQKDSDDDKEKGE. The span at 440-450 shows a compositional bias: basic residues; it reads KSKKKKKKKKK. A phosphoserine mark is found at S456, S477, S493, and S495. Composition is skewed to polar residues over residues 519–535 and 548–567; these read PSVT…SSQV and NAKQ…NWES. Phosphoserine is present on S567. Over residues 570-581 the composition is skewed to basic residues; it reads QIKKKKKARRET.

As to quaternary structure, interacts with BCCIP, CREBBP/CBP and RELA/p65. Widely expressed, with highest levels in liver, kidney, prostate and small intestine. Not detected in endothelial cells.

It is found in the endoplasmic reticulum membrane. The protein resides in the nucleus membrane. It localises to the cell junction. Its subcellular location is the tight junction. The protein localises to the nucleus. It is found in the nucleolus. The protein resides in the cytoplasm. It localises to the perinuclear region. In terms of biological role, down-regulates SLC1A2/EAAT2 promoter activity when expressed ectopically. Activates the nuclear factor kappa-B (NF-kappa-B) transcription factor. Promotes anchorage-independent growth of immortalized melanocytes and astrocytes which is a key component in tumor cell expansion. Promotes lung metastasis and also has an effect on bone and brain metastasis, possibly by enhancing the seeding of tumor cells to the target organ endothelium. Induces chemoresistance. The polypeptide is Protein LYRIC (Mtdh) (Rattus norvegicus (Rat)).